The following is a 348-amino-acid chain: Uroporphyrinogen decarboxylase (348 aa).

Residues 27–31 (RQAGR), Phe-46, Asp-76, Tyr-152, Ser-207, and His-320 contribute to the substrate site.

Belongs to the uroporphyrinogen decarboxylase family. Homodimer.

The protein localises to the cytoplasm. It carries out the reaction uroporphyrinogen III + 4 H(+) = coproporphyrinogen III + 4 CO2. The protein operates within porphyrin-containing compound metabolism; protoporphyrin-IX biosynthesis; coproporphyrinogen-III from 5-aminolevulinate: step 4/4. Its function is as follows. Catalyzes the decarboxylation of four acetate groups of uroporphyrinogen-III to yield coproporphyrinogen-III. The protein is Uroporphyrinogen decarboxylase of Bacillus thuringiensis (strain Al Hakam).